A 268-amino-acid chain; its full sequence is Ribosomal RNA small subunit methyltransferase A (268 aa).

Positions 23, 25, 50, 72, 97, and 116 each coordinate S-adenosyl-L-methionine.

The protein belongs to the class I-like SAM-binding methyltransferase superfamily. rRNA adenine N(6)-methyltransferase family. RsmA subfamily.

It is found in the cytoplasm. It catalyses the reaction adenosine(1518)/adenosine(1519) in 16S rRNA + 4 S-adenosyl-L-methionine = N(6)-dimethyladenosine(1518)/N(6)-dimethyladenosine(1519) in 16S rRNA + 4 S-adenosyl-L-homocysteine + 4 H(+). Functionally, specifically dimethylates two adjacent adenosines (A1518 and A1519) in the loop of a conserved hairpin near the 3'-end of 16S rRNA in the 30S particle. May play a critical role in biogenesis of 30S subunits. This is Ribosomal RNA small subunit methyltransferase A from Rickettsia bellii (strain RML369-C).